Consider the following 164-residue polypeptide: Large ribosomal subunit protein uL11 (164 aa).

Belongs to the universal ribosomal protein uL11 family. As to quaternary structure, part of the ribosomal stalk of the 50S ribosomal subunit. Interacts with L10 and the large rRNA to form the base of the stalk. L10 forms an elongated spine to which L12 dimers bind in a sequential fashion forming a multimeric L10(L12)X complex.

In terms of biological role, forms part of the ribosomal stalk which helps the ribosome interact with GTP-bound translation factors. This chain is Large ribosomal subunit protein uL11, found in Pyrococcus horikoshii (strain ATCC 700860 / DSM 12428 / JCM 9974 / NBRC 100139 / OT-3).